The primary structure comprises 404 residues: Coenzyme F420H(2) oxidase (404 aa).

Fe cation is bound by residues His84, Glu86, Asp88, His89, His152, Asp170, and His233. Positions Val259–Ala399 constitute a Flavodoxin-like domain. FMN-binding positions include Thr265 to Thr270, Ala317 to Asp320, and Ser351 to Gly356.

This sequence in the N-terminal section; belongs to the zinc metallo-hydrolase group 3 family. FMN is required as a cofactor. Requires Fe cation as cofactor.

It catalyses the reaction 2 reduced coenzyme F420-(gamma-L-Glu)(n) + O2 = 2 oxidized coenzyme F420-(gamma-L-Glu)(n) + 2 H2O + 2 H(+). Catalyzes the oxidation of F420H(2) with O(2). May be involved in O(2) detoxification, reducing the intracellular O(2) concentration to a level allowing growth at the expense of methane formation. The chain is Coenzyme F420H(2) oxidase from Methanothermobacter thermautotrophicus (strain ATCC 29096 / DSM 1053 / JCM 10044 / NBRC 100330 / Delta H) (Methanobacterium thermoautotrophicum).